Reading from the N-terminus, the 701-residue chain is Acetyl-coenzyme A synthetase, cytoplasmic (701 aa).

The segment at Met-1–Val-41 is disordered. The segment at Met-1–Val-107 is interaction with TFEB. 3 positions are modified to phosphoserine: Ser-28, Ser-30, and Ser-36. Arg-219–Lys-222 is a CoA binding site. 3 positions are modified to phosphoserine: Ser-263, Ser-265, and Ser-267. Thr-363 provides a ligand contact to CoA. An N6-acetyllysine modification is found at Lys-418. Residues Gly-439–Pro-441, Asp-463–Thr-468, Asp-552, and Arg-567 contribute to the ATP site. The CoA site is built by Ser-575 and Arg-636. The short motif at Lys-656–Arg-668 is the Nuclear localization signal element. The residue at position 659 (Ser-659) is a Phosphoserine; by AMPK. The residue at position 661 (Lys-661) is an N6-acetyllysine.

It belongs to the ATP-dependent AMP-binding enzyme family. In terms of assembly, monomer. Interacts with TFEB. AMPK-mediated phosphorylated form at Ser-659 interacts with KPNA1; this interaction results in nuclear translocation of ACSS2. Interacts with the 'Thr-172' phosphorylated form of PRKAA2. Interacts with CREBBP. Post-translationally, reversibly acetylated at Lys-661. The acetyl-CoA synthase activity is inhibited by acetylation and activated by deacetylation mediated by the deacetylases SIRT1 and SIRT3. Glucose deprivation results in its AMPK-dependent phosphorylation at Ser-659, which leads to exposure of its nuclear localization signal, required for its interaction with KPNA1 and subsequent translocation to the nucleus.

It localises to the cytoplasm. Its subcellular location is the cytosol. The protein resides in the nucleus. It catalyses the reaction acetate + ATP + CoA = acetyl-CoA + AMP + diphosphate. The catalysed reaction is propanoate + ATP + CoA = propanoyl-CoA + AMP + diphosphate. Inhibited by acetylation at Lys-661 and activated by deacetylation mediated by the deacetylases SIRT1 and SIRT3. Catalyzes the synthesis of acetyl-CoA from short-chain fatty acids. Acetate is the preferred substrate. Can also utilize propionate with a much lower affinity. Nuclear ACSS2 promotes glucose deprivation-induced lysosomal biogenesis and autophagy, tumor cell survival and brain tumorigenesis. Glucose deprivation results in AMPK-mediated phosphorylation of ACSS2 leading to its translocation to the nucleus where it binds to TFEB and locally produces acetyl-CoA for histone acetylation in the promoter regions of TFEB target genes thereby activating their transcription. The regulation of genes associated with autophagy and lysosomal activity through ACSS2 is important for brain tumorigenesis and tumor survival. Acts as a chromatin-bound transcriptional coactivator that up-regulates histone acetylation and expression of neuronal genes. Can be recruited to the loci of memory-related neuronal genes to maintain a local acetyl-CoA pool, providing the substrate for histone acetylation and promoting the expression of specific genes, which is essential for maintaining long-term spatial memory. In Homo sapiens (Human), this protein is Acetyl-coenzyme A synthetase, cytoplasmic (ACSS2).